A 453-amino-acid chain; its full sequence is Membrane-bound acylglycerophosphatidylinositol O-acyltransferase mboa-7 (453 aa).

Transmembrane regions (helical) follow at residues 4 to 24 (ILGL…FSFG), 36 to 56 (ILAS…PKIV), 79 to 99 (LYVF…HYIL), 154 to 174 (AYFY…QMLI), 195 to 215 (VRLL…PLDI), 220 to 240 (AIWE…FVVF), and 244 to 264 (VYSA…GIYP). N319 is a glycosylation site (N-linked (GlcNAc...) asparagine). Residue H350 is part of the active site. 2 helical membrane-spanning segments follow: residues 354–374 (AGYF…DVIF) and 421–441 (FWSS…IYSA).

The protein belongs to the membrane-bound acyltransferase family. As to expression, expressed ubiquitously throughout development from early embryo to larval and adult stages. In adults, strongly expressed in pharyngeal muscle, body wall muscle, vulval cells, distal tip cells, intestinal cells and spermatheca.

Its subcellular location is the membrane. The catalysed reaction is 1-octadecanoyl-sn-glycero-3-phospho-(1D-myo-inositol) + (5Z,8Z,11Z,14Z,17Z)-eicosapentaenoyl-CoA = 1-octadecanoyl-2-(5Z,8Z,11Z,14Z,17Z-eicosapentaenoyl)-sn-glycero-3-phospho-(1D-myo-inositol) + CoA. The enzyme catalyses a 1-acyl-sn-glycero-3-phospho-(1D-myo-inositol) + (5Z,8Z,11Z,14Z,17Z)-eicosapentaenoyl-CoA = a 1-acyl-2-(5Z,8Z,11Z,14Z,17Z-eicosapentaenoyl)-sn-glycero-3-phospho-(1D-myo-inositol) + CoA. It catalyses the reaction a 1-acyl-sn-glycero-3-phospho-(1D-myo-inositol) + (5Z,8Z,11Z,14Z)-eicosatetraenoyl-CoA = a 1-acyl-2-(5Z,8Z,11Z,14Z-eicosatetraenoyl)-sn-glycero-3-phospho-(1D-myo-inositol) + CoA. It functions in the pathway lipid metabolism; phospholipid metabolism. Its function is as follows. Acyltransferase which mediates the conversion of lysophosphatidylinositol (1-acyl-sn-glycero-3-phosphatidylinositol or LPI) into phosphatidylinositol (1,2-diacyl-sn-glycero-3-phosphoinositol or PI) (LPIAT activity). Prefers sn-2-LPI rather than sn-1-LPI as the acyl acceptor. Lysophospholipid acyltransferases (LPLATs) catalyze the reacylation step of the phospholipid remodeling pathway also known as the Lands cycle. Involved in the selective incorporation of arachidonoyl-CoA ((5Z,8Z,11Z,14Z)-eicosatetraenoyl-CoA) and (5Z,8Z,11Z,14Z,17Z)-eicosapentaenoyl-CoA (EPA-CoA) into PI. Besides its role in biomembranes, PI is a precursor of PI 3-phosphate (PIP3) and its fatty acid composition has an important role in PI3P signaling. The polypeptide is Membrane-bound acylglycerophosphatidylinositol O-acyltransferase mboa-7 (Caenorhabditis elegans).